The sequence spans 154 residues: MKLRDSLAENNSIRLQAEANTWQEAVKIGVDLLVAADVVEPRYYQAILDGVEQFGPYFVIAPGLVMPHGRPEEGVKKTGFSLVTLKKPLEFNHEDNDPVDILITMAAVDANTHQEVGIMQIVNLFEDEANFDRLRACRTAQEVLDLIDRTNAAA.

One can recognise a PTS EIIA type-2 domain in the interval 6-150; it reads SLAENNSIRL…QEVLDLIDRT (145 aa). The active-site Tele-phosphohistidine intermediate is the histidine 68. Histidine 68 carries the post-translational modification Phosphohistidine.

It localises to the cytoplasm. Functionally, the phosphoenolpyruvate-dependent sugar phosphotransferase system (sugar PTS), a major carbohydrate active transport system, catalyzes the phosphorylation of incoming sugar substrates concomitantly with their translocation across the cell membrane. The enzyme II UlaABC PTS system is involved in ascorbate transport. In Salmonella typhi, this protein is Ascorbate-specific PTS system EIIA component (ulaC).